Consider the following 234-residue polypeptide: Leucyl/phenylalanyl-tRNA--protein transferase (234 aa).

The protein belongs to the L/F-transferase family.

Its subcellular location is the cytoplasm. It carries out the reaction N-terminal L-lysyl-[protein] + L-leucyl-tRNA(Leu) = N-terminal L-leucyl-L-lysyl-[protein] + tRNA(Leu) + H(+). The catalysed reaction is N-terminal L-arginyl-[protein] + L-leucyl-tRNA(Leu) = N-terminal L-leucyl-L-arginyl-[protein] + tRNA(Leu) + H(+). The enzyme catalyses L-phenylalanyl-tRNA(Phe) + an N-terminal L-alpha-aminoacyl-[protein] = an N-terminal L-phenylalanyl-L-alpha-aminoacyl-[protein] + tRNA(Phe). Its function is as follows. Functions in the N-end rule pathway of protein degradation where it conjugates Leu, Phe and, less efficiently, Met from aminoacyl-tRNAs to the N-termini of proteins containing an N-terminal arginine or lysine. The protein is Leucyl/phenylalanyl-tRNA--protein transferase of Tolumonas auensis (strain DSM 9187 / NBRC 110442 / TA 4).